Consider the following 777-residue polypeptide: Ribosome biogenesis protein ERB1 (777 aa).

The disordered stretch occupies residues 1–122 (MAPTAPAKKR…RPNYRVVEDA (122 aa)). The span at 36–67 (SEDDSDFVASGDEDEEDEDEDEDEDKDEDDEH) shows a compositional bias: acidic residues. WD repeat units lie at residues 430–469 (GHEG…QVWA), 473–513 (SSDE…PEVE), 562–604 (TVRS…SQIP), 606–645 (RKLS…LVKV), 648–687 (PGAR…RPYK), 691–731 (FHPQ…DLME), and 747–777 (VDSL…RLWM).

Belongs to the WD repeat BOP1/ERB1 family. Component of the NOP7 complex, composed of ERB1, NOP7 and YTM1. The complex is held together by ERB1, which interacts with NOP7 via its N-terminal domain and with YTM1 via a high-affinity interaction between the seven-bladed beta-propeller domains of the 2 proteins. The NOP7 complex associates with the 66S pre-ribosome.

The protein resides in the nucleus. It is found in the nucleolus. It localises to the nucleoplasm. Its function is as follows. Component of the NOP7 complex, which is required for maturation of the 25S and 5.8S ribosomal RNAs and formation of the 60S ribosome. The protein is Ribosome biogenesis protein ERB1 of Pyricularia oryzae (strain 70-15 / ATCC MYA-4617 / FGSC 8958) (Rice blast fungus).